We begin with the raw amino-acid sequence, 401 residues long: Decapping and exoribonuclease protein (401 aa).

The disordered stretch occupies residues 1–27; that stretch reads MEGNKSMQREKIDRPMKRGPEQNSLSP. Basic and acidic residues predominate over residues 7–20; it reads MQREKIDRPMKRGP. Residues Arg-69, Glu-114, and 149–151 each bind substrate; that span reads WRG. Glu-210 lines the Mg(2+) pocket. Substrate-binding residues include Cys-235 and Glu-252. Positions 252, 254, 271, and 272 each coordinate Mg(2+). Substrate is bound by residues Lys-273 and Gln-298.

Belongs to the DXO/Dom3Z family. Mg(2+) is required as a cofactor.

It is found in the nucleus. The enzyme catalyses a 5'-end triphospho-ribonucleoside in mRNA + H2O = a 5'-end phospho-ribonucleoside in mRNA + diphosphate + H(+). The catalysed reaction is a 5'-end NAD(+)-phospho-ribonucleoside in mRNA + H2O = a 5'-end phospho-ribonucleoside in mRNA + NAD(+) + H(+). It carries out the reaction a 5'-end NAD(+)-phospho-ribonucleoside in snoRNA + H2O = a 5'-end phospho-ribonucleoside in snoRNA + NAD(+) + H(+). It catalyses the reaction a 5'-end (N(7)-methyl 5'-triphosphoguanosine)-ribonucleoside-ribonucleotide in mRNA + H2O = a (N(7)-methyl 5'-triphosphoguanosine)-nucleoside + a 5'-end phospho-ribonucleoside in mRNA + H(+). The enzyme catalyses a 5'-end FAD-phospho-ribonucleoside in mRNA + H2O = a 5'-end phospho-ribonucleoside in mRNA + FAD + H(+). The catalysed reaction is a 5'-end CoA-ribonucleoside in mRNA + H2O = 3'-dephospho-CoA + a 5'-end phospho-ribonucleoside in mRNA + H(+). In terms of biological role, decapping enzyme for NAD-capped RNAs: specifically hydrolyzes the nicotinamide adenine dinucleotide (NAD) cap from a subset of RNAs by removing the entire NAD moiety from the 5'-end of an NAD-capped RNA. The NAD-cap is present at the 5'-end of some RNAs and snoRNAs. In contrast to the canonical 5'-end N7 methylguanosine (m7G) cap, the NAD cap promotes mRNA decay. Also acts as a non-canonical decapping enzyme that removes the entire cap structure of m7G capped or incompletely capped RNAs and mediates their subsequent degradation. Specifically degrades pre-mRNAs with a defective 5'-end m7G cap and is part of a pre-mRNA capping quality control. Has decapping activity toward incomplete 5'-end m7G cap mRNAs such as unmethylated 5'-end-capped RNA (cap0), while it has no activity toward 2'-O-ribose methylated m7G cap (cap1). Also has 5'-3' exoribonuclease activities: The 5'-end monophosphate RNA is then degraded by the 5'-3' exoribonuclease activity, enabling this enzyme to decap and degrade incompletely capped mRNAs. Also possesses RNA 5'-pyrophosphohydrolase activity by hydrolyzing the 5'-end triphosphate to release pyrophosphates. Exhibits decapping activity towards FAD-capped RNAs. Exhibits decapping activity towards dpCoA-capped RNAs in vitro. This is Decapping and exoribonuclease protein from Xenopus laevis (African clawed frog).